The sequence spans 408 residues: LL-diaminopimelate aminotransferase (408 aa).

The substrate site is built by tyrosine 15 and glycine 42. Pyridoxal 5'-phosphate is bound by residues tyrosine 72, 108 to 109 (SK), tyrosine 132, asparagine 187, tyrosine 218, and 246 to 248 (SFS). Substrate contacts are provided by lysine 109, tyrosine 132, and asparagine 187. The residue at position 249 (lysine 249) is an N6-(pyridoxal phosphate)lysine. The pyridoxal 5'-phosphate site is built by arginine 257 and asparagine 292. Positions 292 and 388 each coordinate substrate.

It belongs to the class-I pyridoxal-phosphate-dependent aminotransferase family. LL-diaminopimelate aminotransferase subfamily. In terms of assembly, homodimer. Pyridoxal 5'-phosphate is required as a cofactor.

The catalysed reaction is (2S,6S)-2,6-diaminopimelate + 2-oxoglutarate = (S)-2,3,4,5-tetrahydrodipicolinate + L-glutamate + H2O + H(+). Its pathway is amino-acid biosynthesis; L-lysine biosynthesis via DAP pathway; LL-2,6-diaminopimelate from (S)-tetrahydrodipicolinate (aminotransferase route): step 1/1. In terms of biological role, involved in the synthesis of meso-diaminopimelate (m-DAP or DL-DAP), required for both lysine and peptidoglycan biosynthesis. Catalyzes the direct conversion of tetrahydrodipicolinate to LL-diaminopimelate. This Leptospira borgpetersenii serovar Hardjo-bovis (strain JB197) protein is LL-diaminopimelate aminotransferase.